Reading from the N-terminus, the 503-residue chain is ATP synthase subunit alpha (503 aa).

169 to 176 (GDRSTGKT) provides a ligand contact to ATP.

This sequence belongs to the ATPase alpha/beta chains family. F-type ATPases have 2 components, CF(1) - the catalytic core - and CF(0) - the membrane proton channel. CF(1) has five subunits: alpha(3), beta(3), gamma(1), delta(1), epsilon(1). CF(0) has three main subunits: a(1), b(2) and c(9-12). The alpha and beta chains form an alternating ring which encloses part of the gamma chain. CF(1) is attached to CF(0) by a central stalk formed by the gamma and epsilon chains, while a peripheral stalk is formed by the delta and b chains.

It localises to the cell membrane. It carries out the reaction ATP + H2O + 4 H(+)(in) = ADP + phosphate + 5 H(+)(out). Functionally, produces ATP from ADP in the presence of a proton gradient across the membrane. The alpha chain is a regulatory subunit. In Dehalococcoides mccartyi (strain ATCC BAA-2266 / KCTC 15142 / 195) (Dehalococcoides ethenogenes (strain 195)), this protein is ATP synthase subunit alpha.